A 237-amino-acid polypeptide reads, in one-letter code: Phosphoribosylaminoimidazole-succinocarboxamide synthase (237 aa).

The protein belongs to the SAICAR synthetase family.

It catalyses the reaction 5-amino-1-(5-phospho-D-ribosyl)imidazole-4-carboxylate + L-aspartate + ATP = (2S)-2-[5-amino-1-(5-phospho-beta-D-ribosyl)imidazole-4-carboxamido]succinate + ADP + phosphate + 2 H(+). Its pathway is purine metabolism; IMP biosynthesis via de novo pathway; 5-amino-1-(5-phospho-D-ribosyl)imidazole-4-carboxamide from 5-amino-1-(5-phospho-D-ribosyl)imidazole-4-carboxylate: step 1/2. This is Phosphoribosylaminoimidazole-succinocarboxamide synthase from Listeria monocytogenes serotype 4b (strain CLIP80459).